The sequence spans 729 residues: Dipeptidyl peptidase 3 (729 aa).

Histidine 459 provides a ligand contact to Zn(2+). Glutamate 460 is a catalytic residue. Zn(2+) is bound by residues histidine 464 and glutamate 517.

The protein belongs to the peptidase M49 family. Zn(2+) is required as a cofactor.

It is found in the cytoplasm. It catalyses the reaction Release of an N-terminal dipeptide from a peptide comprising four or more residues, with broad specificity. Also acts on dipeptidyl 2-naphthylamides.. This is Dipeptidyl peptidase 3 (dpp3) from Nematostella vectensis (Starlet sea anemone).